Consider the following 310-residue polypeptide: GPN-loop GTPase 2 (310 aa).

At A2 the chain carries N-acetylalanine. 19 to 24 lines the GTP pocket; sequence GSGKTT. The Gly-Pro-Asn (GPN)-loop; involved in dimer interface signature appears at 76-78; sequence GPN. 178-181 serves as a coordination point for GTP; sequence SKMD.

Belongs to the GPN-loop GTPase family. Heterodimers with GPN1 or GPN3. Binds to RNA polymerase II (RNAPII).

Functionally, small GTPase required for proper localization of RNA polymerase II and III (RNAPII and RNAPIII). May act at an RNAP assembly step prior to nuclear import. In Rattus norvegicus (Rat), this protein is GPN-loop GTPase 2.